The sequence spans 942 residues: Inter-alpha-trypsin inhibitor heavy chain H5 (942 aa).

An N-terminal signal peptide occupies residues 1–16 (MLLLLGLCLGLSLCVG). The 127-residue stretch at 35-161 (VPRQVRLLQR…KAAFFLSYEE (127 aa)) folds into the VIT domain. 2 N-linked (GlcNAc...) asparagine glycosylation sites follow: Asn-97 and Asn-127. 2 disordered regions span residues 116-136 (KKSGDRVKEKRNKTTEENGEK) and 208-227 (SRQRGSGRGEDDSGPPPSTV). 3 N-linked (GlcNAc...) asparagine glycosylation sites follow: Asn-231, Asn-421, and Asn-508. Positions 295-478 (NVVFVLDSSA…SQLIGFYDEI (184 aa)) constitute a VWFA domain. Positions 550–571 (QKAGKDVTGSPRPGGDGEGDTN) are disordered. 3 N-linked (GlcNAc...) asparagine glycosylation sites follow: Asn-776, Asn-795, and Asn-862.

Belongs to the ITIH family. Abundantly expressed in placenta. Less abundant expression in mammary gland and ovary. Expression is barely detectable levels in all other tissues tested.

Its subcellular location is the secreted. May act as a tumor suppressor. This Homo sapiens (Human) protein is Inter-alpha-trypsin inhibitor heavy chain H5 (ITIH5).